The primary structure comprises 382 residues: Putative oxidoreductase C1F5.03c (382 aa).

Residues 7–27 traverse the membrane as a helical segment; sequence IVIVGGGITGVSCLYFLAHHP.

It belongs to the TDA3 family.

The protein localises to the cytoplasm. It localises to the membrane. Putative oxidoreductase that negatively regulates the retrieval of cargo from late endosomes to the Golgi. In Schizosaccharomyces pombe (strain 972 / ATCC 24843) (Fission yeast), this protein is Putative oxidoreductase C1F5.03c.